The primary structure comprises 136 residues: Small ribosomal subunit protein uS19 (136 aa).

Belongs to the universal ribosomal protein uS19 family.

Its function is as follows. Protein S19 forms a complex with S13 that binds strongly to the 16S ribosomal RNA. This is Small ribosomal subunit protein uS19 from Methanosphaera stadtmanae (strain ATCC 43021 / DSM 3091 / JCM 11832 / MCB-3).